The sequence spans 379 residues: F-box protein At5g18160 (379 aa).

A disordered region spans residues 1–26 (MDKQDEKKQGTTKSSSTLTTRCSHGN). Polar residues predominate over residues 11–26 (TTKSSSTLTTRCSHGN). Positions 28–74 (ISQSNSIPLDITIEILSRLPAKSIVRSRSVSKLWSSITTTPEFIKHR) constitute an F-box domain.

This is F-box protein At5g18160 from Arabidopsis thaliana (Mouse-ear cress).